The chain runs to 520 residues: 2-isopropylmalate synthase (520 aa).

Residues 5 to 267 (VIIFDTTLRD…YTNINHQEIY (263 aa)) enclose the Pyruvate carboxyltransferase domain. Residues Asp14, His202, His204, and Asn238 each coordinate Mn(2+). The regulatory domain stretch occupies residues 392-520 (HLDNFNIQSG…RIQQNTKEMV (129 aa)).

Belongs to the alpha-IPM synthase/homocitrate synthase family. LeuA type 1 subfamily. Homodimer. The cofactor is Mn(2+).

It is found in the cytoplasm. It carries out the reaction 3-methyl-2-oxobutanoate + acetyl-CoA + H2O = (2S)-2-isopropylmalate + CoA + H(+). The protein operates within amino-acid biosynthesis; L-leucine biosynthesis; L-leucine from 3-methyl-2-oxobutanoate: step 1/4. Catalyzes the condensation of the acetyl group of acetyl-CoA with 3-methyl-2-oxobutanoate (2-ketoisovalerate) to form 3-carboxy-3-hydroxy-4-methylpentanoate (2-isopropylmalate). The protein is 2-isopropylmalate synthase of Photorhabdus laumondii subsp. laumondii (strain DSM 15139 / CIP 105565 / TT01) (Photorhabdus luminescens subsp. laumondii).